The chain runs to 210 residues: Probable nicotinate-nucleotide adenylyltransferase (210 aa).

It belongs to the NadD family.

The catalysed reaction is nicotinate beta-D-ribonucleotide + ATP + H(+) = deamido-NAD(+) + diphosphate. Its pathway is cofactor biosynthesis; NAD(+) biosynthesis; deamido-NAD(+) from nicotinate D-ribonucleotide: step 1/1. Its function is as follows. Catalyzes the reversible adenylation of nicotinate mononucleotide (NaMN) to nicotinic acid adenine dinucleotide (NaAD). This is Probable nicotinate-nucleotide adenylyltransferase from Streptococcus pyogenes serotype M18 (strain MGAS8232).